Consider the following 255-residue polypeptide: Small ribosomal subunit protein uS2 (255 aa).

The tract at residues 231–255 (RLQTGAEEEFSTEGEEVVEETPAEA) is disordered. Acidic residues predominate over residues 236 to 255 (AEEEFSTEGEEVVEETPAEA).

Belongs to the universal ribosomal protein uS2 family.

The sequence is that of Small ribosomal subunit protein uS2 from Citrifermentans bemidjiense (strain ATCC BAA-1014 / DSM 16622 / JCM 12645 / Bem) (Geobacter bemidjiensis).